Reading from the N-terminus, the 477-residue chain is Aryl-phospho-beta-D-glucosidase BglC (477 aa).

Glutamate 170 acts as the Proton donor in catalysis. Glutamate 378 (nucleophile) is an active-site residue.

The protein belongs to the glycosyl hydrolase 1 family.

The catalysed reaction is 6-phospho-beta-D-glucosyl-(1-&gt;4)-D-glucose + H2O = D-glucose 6-phosphate + D-glucose. In terms of biological role, is able to catalyze the hydrolysis of aryl-phospho-beta-D-glucosides such as 4-methylumbelliferyl-phospho-beta-D-glucopyranoside (MUG-P), phosphoarbutin and phosphosalicin. Is not essential for growth on arbutin and salicin as the sole carbon source. This is Aryl-phospho-beta-D-glucosidase BglC (bglC) from Bacillus subtilis (strain 168).